The following is a 907-amino-acid chain: Protein translocase subunit SecA (907 aa).

Residues Gln-87, 105–109, and Asp-512 contribute to the ATP site; that span reads GEGKT. A disordered region spans residues 834–907; it reads QEDVERMEEQ…KKYKQCHGKI (74 aa). 2 stretches are compositionally biased toward basic and acidic residues: residues 836–853 and 873–888; these read DVER…EAAR and EEAH…KVGR. Cys-892, Cys-894, Cys-903, and His-904 together coordinate Zn(2+). Over residues 898–907 the composition is skewed to basic residues; that stretch reads KKYKQCHGKI.

This sequence belongs to the SecA family. Monomer and homodimer. Part of the essential Sec protein translocation apparatus which comprises SecA, SecYEG and auxiliary proteins SecDF-YajC and YidC. Requires Zn(2+) as cofactor.

It localises to the cell inner membrane. It is found in the cytoplasm. It catalyses the reaction ATP + H2O + cellular proteinSide 1 = ADP + phosphate + cellular proteinSide 2.. Its function is as follows. Part of the Sec protein translocase complex. Interacts with the SecYEG preprotein conducting channel. Has a central role in coupling the hydrolysis of ATP to the transfer of proteins into and across the cell membrane, serving both as a receptor for the preprotein-SecB complex and as an ATP-driven molecular motor driving the stepwise translocation of polypeptide chains across the membrane. In Aliivibrio fischeri (strain MJ11) (Vibrio fischeri), this protein is Protein translocase subunit SecA.